The primary structure comprises 97 residues: Translation initiation factor 1A (97 aa).

Residues 8 to 82 enclose the S1-like domain; that stretch reads IRVRLPDRKK…DRADIVWRYT (75 aa).

Belongs to the eIF-1A family.

Seems to be required for maximal rate of protein biosynthesis. Enhances ribosome dissociation into subunits and stabilizes the binding of the initiator Met-tRNA(I) to 40 S ribosomal subunits. The polypeptide is Translation initiation factor 1A (eIF1A) (Archaeoglobus fulgidus (strain ATCC 49558 / DSM 4304 / JCM 9628 / NBRC 100126 / VC-16)).